The primary structure comprises 861 residues: Leucine--tRNA ligase (861 aa).

The 'HIGH' region signature appears at 42-52; it reads PYPSGKLHMGH. A 'KMSKS' region motif is present at residues 620-624; sequence KMSKS. ATP is bound at residue Lys-623.

This sequence belongs to the class-I aminoacyl-tRNA synthetase family.

The protein resides in the cytoplasm. It catalyses the reaction tRNA(Leu) + L-leucine + ATP = L-leucyl-tRNA(Leu) + AMP + diphosphate. The sequence is that of Leucine--tRNA ligase from Marinobacter nauticus (strain ATCC 700491 / DSM 11845 / VT8) (Marinobacter aquaeolei).